The chain runs to 485 residues: Glutamyl-tRNA(Gln) amidotransferase subunit A (485 aa).

Catalysis depends on charge relay system residues Lys76 and Ser152. Ser176 acts as the Acyl-ester intermediate in catalysis.

This sequence belongs to the amidase family. GatA subfamily. In terms of assembly, heterotrimer of A, B and C subunits.

The enzyme catalyses L-glutamyl-tRNA(Gln) + L-glutamine + ATP + H2O = L-glutaminyl-tRNA(Gln) + L-glutamate + ADP + phosphate + H(+). Allows the formation of correctly charged Gln-tRNA(Gln) through the transamidation of misacylated Glu-tRNA(Gln) in organisms which lack glutaminyl-tRNA synthetase. The reaction takes place in the presence of glutamine and ATP through an activated gamma-phospho-Glu-tRNA(Gln). This is Glutamyl-tRNA(Gln) amidotransferase subunit A from Dechloromonas aromatica (strain RCB).